We begin with the raw amino-acid sequence, 82 residues long: Small ribosomal subunit protein bS16 (82 aa).

The protein belongs to the bacterial ribosomal protein bS16 family.

The chain is Small ribosomal subunit protein bS16 from Yersinia enterocolitica serotype O:8 / biotype 1B (strain NCTC 13174 / 8081).